The sequence spans 206 residues: Small ribosomal subunit protein uS4 (206 aa).

The region spanning 96–156 is the S4 RNA-binding domain; that stretch reads TRLDNVVYRM…EKSRTQARIK (61 aa).

It belongs to the universal ribosomal protein uS4 family. Part of the 30S ribosomal subunit. Contacts protein S5. The interaction surface between S4 and S5 is involved in control of translational fidelity.

One of the primary rRNA binding proteins, it binds directly to 16S rRNA where it nucleates assembly of the body of the 30S subunit. Functionally, with S5 and S12 plays an important role in translational accuracy. The protein is Small ribosomal subunit protein uS4 of Shewanella baltica (strain OS223).